A 416-amino-acid polypeptide reads, in one-letter code: NADH-quinone oxidoreductase subunit H (416 aa).

9 helical membrane-spanning segments follow: residues 16–36, 84–104, 124–144, 165–185, 197–217, 260–280, 288–308, 320–340, and 353–373; these read LILAKAVGVFVFLVLTVLAAI, PVYLLAPVISVIPAFLAFAVI, LAVAVLYILAVTSVGVYGIVL, VVSYEIAMALSFATVFLYAGT, STWYVFLLLPSFLVYVTSMVG, VSALATTMFLGGWHAPWPISL, WWPLLWFTAKVWVFLFVYIWL, FMAIGWKMLIPVSLAWIMIVA, and WASGLLIAGTVLTFGLAVILW.

It belongs to the complex I subunit 1 family. NDH-1 is composed of 14 different subunits. Subunits NuoA, H, J, K, L, M, N constitute the membrane sector of the complex.

The protein resides in the cell membrane. It catalyses the reaction a quinone + NADH + 5 H(+)(in) = a quinol + NAD(+) + 4 H(+)(out). NDH-1 shuttles electrons from NADH, via FMN and iron-sulfur (Fe-S) centers, to quinones in the respiratory chain. The immediate electron acceptor for the enzyme in this species is believed to be menaquinone. Couples the redox reaction to proton translocation (for every two electrons transferred, four hydrogen ions are translocated across the cytoplasmic membrane), and thus conserves the redox energy in a proton gradient. This subunit may bind ubiquinone. This chain is NADH-quinone oxidoreductase subunit H, found in Mycobacterium sp. (strain KMS).